The sequence spans 498 residues: MRINPTTSDPAVSIREKNNLGRIAQIIGPVLDVAFPPGKMPNIYNALVVKGRDTLGQEINVTCEVQQLLGNNRVRAVAMSATEGLKRGMDVVDMGNPLSVPVGGATLGRIFNVLGEPVNNLGPVDTLTTSPIHKSAPAFIDLDTTLSIFETGIKVVDLLAPYRRGGKIGLFGGAGVGKTVLIMELINNIAKAHGGVSVFGGVGERTREGNDLYMEMKESGVINELNLADSKVALVYGQMNEPPGARMRVGLTALTMAEYFRDVNEQDVLLFIDNIFRFVQAGSEVSALLGRMPSAVGYQPTLSAEMGSLQERITSTKKGSITSIQAVYVPADDLTDPAPATTFAHLDATTVLSRGLAAKGIYPAVDPLDSTSTMLQPRIVGEEHYETAQQVKQTLQRYKELQDIIAILGLDELSEEDRLTVARARKIERFLSQPFFVAEVFTGSPGKYVGLAETIRGFNLILSGEFDSLPEQAFYLVGNIDEATAKATNLEMESKLKK.

Thr-6 carries the phosphothreonine modification. Ser-13 is subject to Phosphoserine. Position 172–179 (172–179) interacts with ATP; sequence GGAGVGKT.

The protein belongs to the ATPase alpha/beta chains family. As to quaternary structure, F-type ATPases have 2 components, CF(1) - the catalytic core - and CF(0) - the membrane proton channel. CF(1) has five subunits: alpha(3), beta(3), gamma(1), delta(1), epsilon(1). CF(0) has four main subunits: a(1), b(1), b'(1) and c(9-12).

It localises to the plastid. Its subcellular location is the chloroplast thylakoid membrane. The enzyme catalyses ATP + H2O + 4 H(+)(in) = ADP + phosphate + 5 H(+)(out). In terms of biological role, produces ATP from ADP in the presence of a proton gradient across the membrane. The catalytic sites are hosted primarily by the beta subunits. The chain is ATP synthase subunit beta, chloroplastic from Brassica napus (Rape).